Reading from the N-terminus, the 123-residue chain is UPF0482 protein YE2026 (123 aa).

A signal peptide spans 1-31; sequence MKITSLPRLMRVFLPVAVLALPLAWQTAALA. A disordered region spans residues 47 to 66; the sequence is GNNDPMSKEQARQSQQQWDD.

The protein belongs to the UPF0482 family.

This chain is UPF0482 protein YE2026, found in Yersinia enterocolitica serotype O:8 / biotype 1B (strain NCTC 13174 / 8081).